A 95-amino-acid chain; its full sequence is IgNAR transmembrane form NE (95 aa).

Residues 1 to 36 enclose the Ig-like domain; that stretch reads LTFSTRSLLNLPAVEWKSGAKYTCTASHSPSQSTVK. The segment covering 24–35 has biased composition (polar residues); it reads CTASHSPSQSTV. The tract at residues 24 to 79 is disordered; the sequence is CTASHSPSQSTVKRVIRNPKESPKGSSETRKSPLEIMESPEDYGTEEDQLENVNED. Basic and acidic residues predominate over residues 41-56; it reads NPKESPKGSSETRKSP. Residues 61-77 show a composition bias toward acidic residues; sequence ESPEDYGTEEDQLENVN. Residue Asn-81 is glycosylated (N-linked (GlcNAc...) asparagine).

In terms of tissue distribution, expressed mainly in lymphoid tissues including spleen, epigonal organ and circulating lymphocytes. Also expressed at low levels in the pancreas.

The sequence is that of IgNAR transmembrane form NE from Ginglymostoma cirratum (Nurse shark).